The primary structure comprises 445 residues: Meiosis-specific serine/threonine-protein kinase mek1 (445 aa).

In terms of domain architecture, FHA spans 62-116 (VSVGRSNTCNYQLLQFTASYKHFRVYSVLIDDDMDPLVYCEDQSSNGTFLNHRLI). Positions 160–421 (NITQRLLGIG…VKQCLSHPWF (262 aa)) constitute a Protein kinase domain. Residues 166–174 (LGIGGFSRI) and Lys-189 contribute to the ATP site. Residue Asp-281 is the Proton acceptor of the active site.

This sequence belongs to the protein kinase superfamily. CAMK Ser/Thr protein kinase family. CHEK2 subfamily.

It carries out the reaction L-seryl-[protein] + ATP = O-phospho-L-seryl-[protein] + ADP + H(+). It catalyses the reaction L-threonyl-[protein] + ATP = O-phospho-L-threonyl-[protein] + ADP + H(+). Probable protein kinase required for meiotic recombination. The sequence is that of Meiosis-specific serine/threonine-protein kinase mek1 (mek1) from Schizosaccharomyces pombe (strain 972 / ATCC 24843) (Fission yeast).